The chain runs to 101 residues: Movement protein (101 aa).

Residues 30–50 (EVAVLSFVALICIYLLYLWVL) traverse the membrane as a helical segment. The segment at 78–101 (RSPIPNTLEPTAPVHPGPFVPGSG) is disordered. A compositionally biased stretch (pro residues) spans 90-101 (PVHPGPFVPGSG).

Belongs to the mastrevirus movement protein family. As to quaternary structure, interacts with the capsid protein (CP). Part of a MP-CP-viral DNA complex.

It localises to the host membrane. Its function is as follows. Involved in the viral transport within, and between cells. In Maize streak virus genotype E (isolate Pat) (MSV), this protein is Movement protein.